The chain runs to 637 residues: Protein kinase domain-containing protein ppk3 (637 aa).

The Protein kinase domain occupies 1-296; the sequence is MDFIKSAASF…QLLSSKLEVI (296 aa). The HEAT repeat unit spans residues 414–450; that stretch reads KTLNNELLRSLAVVQNDQHPTLRTNSTICLGKIAEYL. The segment covering 576–586 has biased composition (basic and acidic residues); the sequence is NDTTEIKEKKN. The tract at residues 576–637 is disordered; that stretch reads NDTTEIKEKK…ENNVEESWGL (62 aa). A compositionally biased stretch (acidic residues) spans 608-631; the sequence is ETEEQIDESWMENWNDEEETENNV.

It is found in the golgi apparatus. The chain is Protein kinase domain-containing protein ppk3 (ppk3) from Schizosaccharomyces pombe (strain 972 / ATCC 24843) (Fission yeast).